Reading from the N-terminus, the 351-residue chain is Peptide chain release factor 1 (351 aa).

Q229 bears the N5-methylglutamine mark.

Belongs to the prokaryotic/mitochondrial release factor family. In terms of processing, methylated by PrmC. Methylation increases the termination efficiency of RF1.

Its subcellular location is the cytoplasm. Functionally, peptide chain release factor 1 directs the termination of translation in response to the peptide chain termination codons UAG and UAA. This is Peptide chain release factor 1 from Dinoroseobacter shibae (strain DSM 16493 / NCIMB 14021 / DFL 12).